A 276-amino-acid polypeptide reads, in one-letter code: Putative oxidoreductase SadH (276 aa).

Serine 142 contributes to the substrate binding site. Tyrosine 155 functions as the Proton acceptor in the catalytic mechanism.

Belongs to the short-chain dehydrogenases/reductases (SDR) family.

Required for maintaining the appropriate mycolic acid composition and permeability of the envelope on its exposure to acidic pH. The chain is Putative oxidoreductase SadH (sadH) from Mycobacterium tuberculosis (strain CDC 1551 / Oshkosh).